The primary structure comprises 284 residues: Bifunctional protein FolD 2 (284 aa).

NADP(+)-binding positions include 165–167, Thr-192, and Val-233; that span reads GRG.

The protein belongs to the tetrahydrofolate dehydrogenase/cyclohydrolase family. As to quaternary structure, homodimer.

It catalyses the reaction (6R)-5,10-methylene-5,6,7,8-tetrahydrofolate + NADP(+) = (6R)-5,10-methenyltetrahydrofolate + NADPH. It carries out the reaction (6R)-5,10-methenyltetrahydrofolate + H2O = (6R)-10-formyltetrahydrofolate + H(+). Its pathway is one-carbon metabolism; tetrahydrofolate interconversion. Functionally, catalyzes the oxidation of 5,10-methylenetetrahydrofolate to 5,10-methenyltetrahydrofolate and then the hydrolysis of 5,10-methenyltetrahydrofolate to 10-formyltetrahydrofolate. The sequence is that of Bifunctional protein FolD 2 from Streptomyces avermitilis (strain ATCC 31267 / DSM 46492 / JCM 5070 / NBRC 14893 / NCIMB 12804 / NRRL 8165 / MA-4680).